The sequence spans 335 residues: Phospho-N-acetylmuramoyl-pentapeptide-transferase (335 aa).

The next 10 membrane-spanning stretches (helical) occupy residues 3–23 (LTIL…PHFI), 53–73 (GGTV…LVYF), 78–98 (SLGL…IGFL), 118–138 (FTFQ…PSGI), 143–163 (VFGY…FWVV), 174–194 (GIDG…GVIA), 200–220 (FDVL…FLFN), 226–246 (IFMG…ISIA), 251–271 (WTLL…MLQV), and 314–334 (VDAF…AILY).

This sequence belongs to the glycosyltransferase 4 family. MraY subfamily. The cofactor is Mg(2+).

It is found in the cell membrane. It carries out the reaction UDP-N-acetyl-alpha-D-muramoyl-L-alanyl-gamma-D-glutamyl-L-lysyl-D-alanyl-D-alanine + di-trans,octa-cis-undecaprenyl phosphate = Mur2Ac(oyl-L-Ala-gamma-D-Glu-L-Lys-D-Ala-D-Ala)-di-trans,octa-cis-undecaprenyl diphosphate + UMP. Its pathway is cell wall biogenesis; peptidoglycan biosynthesis. In terms of biological role, catalyzes the initial step of the lipid cycle reactions in the biosynthesis of the cell wall peptidoglycan: transfers peptidoglycan precursor phospho-MurNAc-pentapeptide from UDP-MurNAc-pentapeptide onto the lipid carrier undecaprenyl phosphate, yielding undecaprenyl-pyrophosphoryl-MurNAc-pentapeptide, known as lipid I. The sequence is that of Phospho-N-acetylmuramoyl-pentapeptide-transferase from Streptococcus equi subsp. equi (strain 4047).